The chain runs to 355 residues: Phosphate acyltransferase (355 aa).

Belongs to the PlsX family. In terms of assembly, homodimer. Probably interacts with PlsY.

It is found in the cytoplasm. It catalyses the reaction a fatty acyl-[ACP] + phosphate = an acyl phosphate + holo-[ACP]. It functions in the pathway lipid metabolism; phospholipid metabolism. In terms of biological role, catalyzes the reversible formation of acyl-phosphate (acyl-PO(4)) from acyl-[acyl-carrier-protein] (acyl-ACP). This enzyme utilizes acyl-ACP as fatty acyl donor, but not acyl-CoA. This Rhodospirillum centenum (strain ATCC 51521 / SW) protein is Phosphate acyltransferase.